The chain runs to 1064 residues: Carbamoyl phosphate synthase large chain (1064 aa).

Positions 1–401 (MPKRNDIKKI…SLLKAVRSLE (401 aa)) are carboxyphosphate synthetic domain. ATP-binding residues include Arg129, Arg169, Gly175, Gly176, Glu208, Ile210, Glu215, Gly241, Val242, His243, Gln284, and Glu298. Residues 133-327 (KELCESINEP…IAKMSAKIAI (195 aa)) enclose the ATP-grasp 1 domain. Gln284, Glu298, and Asn300 together coordinate Mg(2+). Mn(2+) contacts are provided by Gln284, Glu298, and Asn300. An oligomerization domain region spans residues 402–546 (IGVFHNEMTE…YSTYEWENES (145 aa)). Residues 547 to 929 (KRSDKEKIIV…ALYKSFEAAK (383 aa)) form a carbamoyl phosphate synthetic domain region. The ATP-grasp 2 domain occupies 671–861 (EKALQDLDIP…MAQLATQMIL (191 aa)). ATP-binding residues include Arg707, Ser746, Leu748, Glu752, Gly777, Val778, His779, Ser780, Gln820, and Glu832. Gln820, Glu832, and Asn834 together coordinate Mg(2+). 3 residues coordinate Mn(2+): Gln820, Glu832, and Asn834. The MGS-like domain occupies 930 to 1064 (LHMADYGSVL…QSRSFTTKNI (135 aa)). An allosteric domain region spans residues 930–1064 (LHMADYGSVL…QSRSFTTKNI (135 aa)).

The protein belongs to the CarB family. As to quaternary structure, composed of two chains; the small (or glutamine) chain promotes the hydrolysis of glutamine to ammonia, which is used by the large (or ammonia) chain to synthesize carbamoyl phosphate. Tetramer of heterodimers (alpha,beta)4. The cofactor is Mg(2+). Mn(2+) is required as a cofactor.

The catalysed reaction is hydrogencarbonate + L-glutamine + 2 ATP + H2O = carbamoyl phosphate + L-glutamate + 2 ADP + phosphate + 2 H(+). It carries out the reaction hydrogencarbonate + NH4(+) + 2 ATP = carbamoyl phosphate + 2 ADP + phosphate + 2 H(+). Its pathway is amino-acid biosynthesis; L-arginine biosynthesis; carbamoyl phosphate from bicarbonate: step 1/1. The protein operates within pyrimidine metabolism; UMP biosynthesis via de novo pathway; (S)-dihydroorotate from bicarbonate: step 1/3. Large subunit of the glutamine-dependent carbamoyl phosphate synthetase (CPSase). CPSase catalyzes the formation of carbamoyl phosphate from the ammonia moiety of glutamine, carbonate, and phosphate donated by ATP, constituting the first step of 2 biosynthetic pathways, one leading to arginine and/or urea and the other to pyrimidine nucleotides. The large subunit (synthetase) binds the substrates ammonia (free or transferred from glutamine from the small subunit), hydrogencarbonate and ATP and carries out an ATP-coupled ligase reaction, activating hydrogencarbonate by forming carboxy phosphate which reacts with ammonia to form carbamoyl phosphate. The sequence is that of Carbamoyl phosphate synthase large chain from Lactococcus lactis subsp. cremoris (strain SK11).